A 335-amino-acid polypeptide reads, in one-letter code: Protein-arginine kinase (335 aa).

The region spanning 20 to 243 (IVMSSRIRLA…QQIINEEMQI (224 aa)) is the Phosphagen kinase C-terminal domain. ATP-binding positions include 23–27 (SSRIR), His81, Arg114, 165–169 (RASVM), and 196–201 (RGIYGE).

It belongs to the ATP:guanido phosphotransferase family.

The catalysed reaction is L-arginyl-[protein] + ATP = N(omega)-phospho-L-arginyl-[protein] + ADP + H(+). Its function is as follows. Catalyzes the specific phosphorylation of arginine residues in proteins. In Staphylococcus haemolyticus (strain JCSC1435), this protein is Protein-arginine kinase.